We begin with the raw amino-acid sequence, 210 residues long: Imidazoleglycerol-phosphate dehydratase (210 aa).

Positions 185–210 (PRRGGSIPSSKGVLEQAGDNNTEKSK) are disordered.

The protein belongs to the imidazoleglycerol-phosphate dehydratase family.

It localises to the cytoplasm. It catalyses the reaction D-erythro-1-(imidazol-4-yl)glycerol 3-phosphate = 3-(imidazol-4-yl)-2-oxopropyl phosphate + H2O. It participates in amino-acid biosynthesis; L-histidine biosynthesis; L-histidine from 5-phospho-alpha-D-ribose 1-diphosphate: step 6/9. The chain is Imidazoleglycerol-phosphate dehydratase from Prochlorococcus marinus (strain SARG / CCMP1375 / SS120).